Here is a 203-residue protein sequence, read N- to C-terminus: Small ribosomal subunit protein uS4 (203 aa).

Residues 93 to 156 enclose the S4 RNA-binding domain; it reads RRLDNVVYRL…LKVPAILEAV (64 aa).

Belongs to the universal ribosomal protein uS4 family. As to quaternary structure, part of the 30S ribosomal subunit. Contacts protein S5. The interaction surface between S4 and S5 is involved in control of translational fidelity.

One of the primary rRNA binding proteins, it binds directly to 16S rRNA where it nucleates assembly of the body of the 30S subunit. Functionally, with S5 and S12 plays an important role in translational accuracy. The sequence is that of Small ribosomal subunit protein uS4 from Streptococcus sanguinis (strain SK36).